A 231-amino-acid chain; its full sequence is Flagellar L-ring protein (231 aa).

An N-terminal signal peptide occupies residues 1-18 (MKRFVSVVALSGVVSLAG). Cys-19 carries the N-palmitoyl cysteine lipid modification. Cys-19 carries S-diacylglycerol cysteine lipidation.

The protein belongs to the FlgH family. The basal body constitutes a major portion of the flagellar organelle and consists of four rings (L,P,S, and M) mounted on a central rod.

The protein resides in the cell outer membrane. It is found in the bacterial flagellum basal body. In terms of biological role, assembles around the rod to form the L-ring and probably protects the motor/basal body from shearing forces during rotation. This chain is Flagellar L-ring protein, found in Pseudomonas fluorescens (strain Pf0-1).